The chain runs to 1110 residues: Error-prone DNA polymerase (1110 aa).

A disordered region spans residues 1072-1110; sequence LGELHEPLNDDRREHPDNPAQRIRHPRDVRILPPSRDFH. Composition is skewed to basic and acidic residues over residues 1073-1088 and 1097-1110; these read GELHEPLNDDRREHPD and PRDVRILPPSRDFH.

Belongs to the DNA polymerase type-C family. DnaE2 subfamily.

It is found in the cytoplasm. It catalyses the reaction DNA(n) + a 2'-deoxyribonucleoside 5'-triphosphate = DNA(n+1) + diphosphate. Its function is as follows. DNA polymerase involved in damage-induced mutagenesis and translesion synthesis (TLS). It is not the major replicative DNA polymerase. The polypeptide is Error-prone DNA polymerase (Rhodopseudomonas palustris (strain BisB5)).